Consider the following 211-residue polypeptide: Probable cytokinin riboside 5'-monophosphate phosphoribohydrolase LOGL3 (211 aa).

Substrate-binding positions include Glu-84, 102–103, 119–125, and Thr-131; these read RK and GYGTLEE.

Belongs to the LOG family. As to expression, expressed in roots, leaves, stems, tiller buds, shoot apex, immature inflorescences and flowers.

It catalyses the reaction N(6)-(dimethylallyl)adenosine 5'-phosphate + H2O = N(6)-dimethylallyladenine + D-ribose 5-phosphate. The enzyme catalyses 9-ribosyl-trans-zeatin 5'-phosphate + H2O = trans-zeatin + D-ribose 5-phosphate. Its function is as follows. Cytokinin-activating enzyme working in the direct activation pathway. Phosphoribohydrolase that converts inactive cytokinin nucleotides to the biologically active free-base forms. The protein is Probable cytokinin riboside 5'-monophosphate phosphoribohydrolase LOGL3 (LOGL3) of Oryza sativa subsp. japonica (Rice).